The following is a 258-amino-acid chain: MTLIHPTAVIDPKAELDSSVKVGAYTVIGPNVQIGANTEIGPHAVINGHTSIGENNRIFQFASLGEIPQDKKYRDEPTKLIIGNGNTIREFTTFNLGTVTGIGETRIGDDNWIMAYCHLAHDCVVGNHTIFANNASLAGHVTIGDYVVLGGYTLVFQFCRIGDYAMTAFAAGVHKDVPPYFMASGYRAEPAGLNSEGMRRNGFTAEQISAVKDVYKTLYHRGIPFEEAKADILRHAETQAELAVFRDFFAQSARGIIR.

The protein belongs to the transferase hexapeptide repeat family. LpxA subfamily. Homotrimer.

Its subcellular location is the cytoplasm. It catalyses the reaction a (3R)-hydroxyacyl-[ACP] + UDP-N-acetyl-alpha-D-glucosamine = a UDP-3-O-[(3R)-3-hydroxyacyl]-N-acetyl-alpha-D-glucosamine + holo-[ACP]. It participates in glycolipid biosynthesis; lipid IV(A) biosynthesis; lipid IV(A) from (3R)-3-hydroxytetradecanoyl-[acyl-carrier-protein] and UDP-N-acetyl-alpha-D-glucosamine: step 1/6. Its function is as follows. Involved in the biosynthesis of lipid A, a phosphorylated glycolipid that anchors the lipopolysaccharide to the outer membrane of the cell. In Neisseria meningitidis serogroup C / serotype 2a (strain ATCC 700532 / DSM 15464 / FAM18), this protein is Acyl-[acyl-carrier-protein]--UDP-N-acetylglucosamine O-acyltransferase.